A 603-amino-acid chain; its full sequence is Glutamyl-tRNA(Gln) amidotransferase subunit B, mitochondrial (603 aa).

A mitochondrion-targeting transit peptide spans 1–32; the sequence is MIRHRLRLALSAAPVTATGRRTRSKTAPRRSL. Residues 12–59 form a disordered region; sequence AAPVTATGRRTRSKTAPRRSLSTQQTQSSASSSSNNLDGDGRAFVPLR. Residues 31–48 are compositionally biased toward low complexity; it reads SLSTQQTQSSASSSSNNL.

Belongs to the GatB/GatE family. GatB subfamily. In terms of assembly, subunit of the heterotrimeric GatCAB amidotransferase (AdT) complex, composed of A, B and C subunits.

The protein localises to the mitochondrion. It catalyses the reaction L-glutamyl-tRNA(Gln) + L-glutamine + ATP + H2O = L-glutaminyl-tRNA(Gln) + L-glutamate + ADP + phosphate + H(+). Allows the formation of correctly charged Gln-tRNA(Gln) through the transamidation of misacylated Glu-tRNA(Gln) in the mitochondria. The reaction takes place in the presence of glutamine and ATP through an activated gamma-phospho-Glu-tRNA(Gln). The protein is Glutamyl-tRNA(Gln) amidotransferase subunit B, mitochondrial of Arthroderma otae (strain ATCC MYA-4605 / CBS 113480) (Microsporum canis).